We begin with the raw amino-acid sequence, 201 residues long: Adenylyl-sulfate kinase (201 aa).

Residue 35–42 participates in ATP binding; the sequence is GLSGSGKS. The active-site Phosphoserine intermediate is Ser-109.

This sequence belongs to the APS kinase family.

The enzyme catalyses adenosine 5'-phosphosulfate + ATP = 3'-phosphoadenylyl sulfate + ADP + H(+). It functions in the pathway sulfur metabolism; hydrogen sulfide biosynthesis; sulfite from sulfate: step 2/3. Its function is as follows. Catalyzes the synthesis of activated sulfate. The polypeptide is Adenylyl-sulfate kinase (Salmonella paratyphi C (strain RKS4594)).